The sequence spans 358 residues: DNA polymerase IV (358 aa).

One can recognise a UmuC domain in the interval 4-185 (IIHVDMDCFY…LPLIKIPGVG (182 aa)). Residues Asp-8 and Asp-103 each coordinate Mg(2+). Glu-104 is a catalytic residue.

This sequence belongs to the DNA polymerase type-Y family. Monomer. Mg(2+) is required as a cofactor.

It is found in the cytoplasm. It catalyses the reaction DNA(n) + a 2'-deoxyribonucleoside 5'-triphosphate = DNA(n+1) + diphosphate. Poorly processive, error-prone DNA polymerase involved in untargeted mutagenesis. Copies undamaged DNA at stalled replication forks, which arise in vivo from mismatched or misaligned primer ends. These misaligned primers can be extended by PolIV. Exhibits no 3'-5' exonuclease (proofreading) activity. May be involved in translesional synthesis, in conjunction with the beta clamp from PolIII. This Shewanella halifaxensis (strain HAW-EB4) protein is DNA polymerase IV.